The following is a 187-amino-acid chain: Large ribosomal subunit protein uL5 (187 aa).

It belongs to the universal ribosomal protein uL5 family. In terms of assembly, part of the 50S ribosomal subunit; part of the 5S rRNA/L5/L18/L25 subcomplex. Contacts the 5S rRNA and the P site tRNA. Forms a bridge to the 30S subunit in the 70S ribosome.

This is one of the proteins that bind and probably mediate the attachment of the 5S RNA into the large ribosomal subunit, where it forms part of the central protuberance. In the 70S ribosome it contacts protein S13 of the 30S subunit (bridge B1b), connecting the 2 subunits; this bridge is implicated in subunit movement. Contacts the P site tRNA; the 5S rRNA and some of its associated proteins might help stabilize positioning of ribosome-bound tRNAs. This is Large ribosomal subunit protein uL5 from Malacoplasma penetrans (strain HF-2) (Mycoplasma penetrans).